Reading from the N-terminus, the 489-residue chain is UDP-N-acetylmuramoyl-L-alanyl-D-glutamate--2,6-diaminopimelate ligase (489 aa).

S30 is a binding site for UDP-N-acetyl-alpha-D-muramoyl-L-alanyl-D-glutamate. 113-119 (GTNGKTS) provides a ligand contact to ATP. UDP-N-acetyl-alpha-D-muramoyl-L-alanyl-D-glutamate is bound by residues 155-156 (TT), S182, Q188, and R190. K222 bears the N6-carboxylysine mark. Meso-2,6-diaminopimelate is bound by residues R388, 412 to 415 (DNPR), G463, and E467. The short motif at 412 to 415 (DNPR) is the Meso-diaminopimelate recognition motif element.

Belongs to the MurCDEF family. MurE subfamily. The cofactor is Mg(2+). Post-translationally, carboxylation is probably crucial for Mg(2+) binding and, consequently, for the gamma-phosphate positioning of ATP.

It localises to the cytoplasm. The enzyme catalyses UDP-N-acetyl-alpha-D-muramoyl-L-alanyl-D-glutamate + meso-2,6-diaminopimelate + ATP = UDP-N-acetyl-alpha-D-muramoyl-L-alanyl-gamma-D-glutamyl-meso-2,6-diaminopimelate + ADP + phosphate + H(+). It participates in cell wall biogenesis; peptidoglycan biosynthesis. In terms of biological role, catalyzes the addition of meso-diaminopimelic acid to the nucleotide precursor UDP-N-acetylmuramoyl-L-alanyl-D-glutamate (UMAG) in the biosynthesis of bacterial cell-wall peptidoglycan. The protein is UDP-N-acetylmuramoyl-L-alanyl-D-glutamate--2,6-diaminopimelate ligase of Coxiella burnetii (strain RSA 493 / Nine Mile phase I).